We begin with the raw amino-acid sequence, 438 residues long: MPKIVVVGAVAGGATCASQIRRLDKESDIIIFEKDRDMSFANCALPYVIGEVVEDRKYALAYTPEKFYDRKQITVKTYHEVIAINDERQTVTVLNRKTNEQFEESYDKLILSPGASANSLGFESDITFTLRNLEDTDAIDQFIKANQVDKVLVIGAGYVSLEVLENLYERGLHPTLIHRSDKINKLMDADMNQPILDELDKREIPYRLNEEIDAINGNEITFKSGKVEHYDMIIEGVGTHPNSKFIESSNIKLDRKGFIPVNDKFETNVPNIYAIGDIATSHYRHVDLPASVPLAWGAHRAASIVAEQIAGNDTIEFKGFLGNNIVKFFDYTFASVGVKPNELKQFDYKMVEVTQGAHANYYPGNSPLHLRVYYDTSNRQILRAAAVGKEGADKRIDVLSMAMMNQLTVDELTEFEVAYAPPYSHPKDLINMIGYKAK.

FAD is bound at residue 8 to 33; the sequence is GAVAGGATCASQIRRLDKESDIIIFE. Positions 15, 19, 22, 39, and 42 each coordinate substrate. C43 acts as the Nucleophile in catalysis. C43 serves as the catalytic Redox-active. Position 71 (K71) interacts with substrate. Residue 151–166 participates in NADP(+) binding; the sequence is VLVIGAGYVSLEVLEN. 267–277 serves as a coordination point for FAD; that stretch reads TNVPNIYAIGD. H299 provides a ligand contact to substrate. FAD is bound at residue Y419. A substrate-binding site is contributed by K427.

The protein belongs to the class-III pyridine nucleotide-disulfide oxidoreductase family. Homodimer. FAD serves as cofactor.

The enzyme catalyses NADP(+) + 2 CoA = CoA-disulfide + NADPH + H(+). Its function is as follows. Catalyzes specifically the NADPH-dependent reduction of coenzyme A disulfide. This Staphylococcus aureus (strain Mu3 / ATCC 700698) protein is Coenzyme A disulfide reductase.